A 347-amino-acid polypeptide reads, in one-letter code: Probable dual-specificity RNA methyltransferase RlmN (347 aa).

The active-site Proton acceptor is the glutamate 94. Positions 100 to 319 (YPSRTIACIS…LDTLVKNGID (220 aa)) constitute a Radical SAM core domain. A disulfide bridge links cysteine 107 with cysteine 334. Residues cysteine 114, cysteine 118, and cysteine 121 each coordinate [4Fe-4S] cluster. S-adenosyl-L-methionine-binding positions include 161–162 (GE), serine 193, 216–218 (SLH), and asparagine 292. The active-site S-methylcysteine intermediate is the cysteine 334.

Belongs to the radical SAM superfamily. RlmN family. [4Fe-4S] cluster serves as cofactor.

Its subcellular location is the cytoplasm. It catalyses the reaction adenosine(2503) in 23S rRNA + 2 reduced [2Fe-2S]-[ferredoxin] + 2 S-adenosyl-L-methionine = 2-methyladenosine(2503) in 23S rRNA + 5'-deoxyadenosine + L-methionine + 2 oxidized [2Fe-2S]-[ferredoxin] + S-adenosyl-L-homocysteine. The enzyme catalyses adenosine(37) in tRNA + 2 reduced [2Fe-2S]-[ferredoxin] + 2 S-adenosyl-L-methionine = 2-methyladenosine(37) in tRNA + 5'-deoxyadenosine + L-methionine + 2 oxidized [2Fe-2S]-[ferredoxin] + S-adenosyl-L-homocysteine. Functionally, specifically methylates position 2 of adenine 2503 in 23S rRNA and position 2 of adenine 37 in tRNAs. The sequence is that of Probable dual-specificity RNA methyltransferase RlmN from Petrotoga mobilis (strain DSM 10674 / SJ95).